The following is a 357-amino-acid chain: 5-hydroxytryptamine receptor 5A (357 aa).

At 1 to 36 the chain is on the extracellular side; sequence MDLPVNLTSFSLSTPSPLETNHSLGKDDLRPSSPLL. N-linked (GlcNAc...) asparagine glycans are attached at residues Asn6 and Asn21. A helical transmembrane segment spans residues 37–63; the sequence is SVFGVLILTLLGFLVAATFAWNLLVLA. The Cytoplasmic portion of the chain corresponds to 64 to 76; sequence TILRVRTFHRVPH. A helical membrane pass occupies residues 77–103; it reads NLVASMAVSDVLVAALVMPLSLVHELS. Topologically, residues 104–114 are extracellular; it reads GRRWQLGRRLC. Cys114 and Cys192 are disulfide-bonded. Residues 115–137 traverse the membrane as a helical segment; sequence QLWIACDVLCCTASIWNVTAIAL. Asp121 lines the serotonin pocket. Over 138 to 155 the chain is Cytoplasmic; that stretch reads DRYWSITRHMEYTLRTRK. Residues 156–176 traverse the membrane as a helical segment; that stretch reads CVSNVMIALTWALSAVISLAP. Over 177-198 the chain is Extracellular; sequence LLFGWGETYSEGSEECQVSREP. A helical transmembrane segment spans residues 199 to 220; it reads SYAVFSTVGAFYLPLCVVLFVY. At 221 to 287 the chain is on the cytoplasmic side; sequence WKIYKAAKFR…QKEQRAALMV (67 aa). Residues 288–312 traverse the membrane as a helical segment; it reads GILIGVFVLCWIPFFLTELISPLCS. The Extracellular segment spans residues 313–314; the sequence is CD. The chain crosses the membrane as a helical span at residues 315–339; that stretch reads IPAIWKSIFLWLGYSNSFFNPLIYT. The Cytoplasmic portion of the chain corresponds to 340–357; sequence AFNKNYNSAFKNFFSRQH.

Belongs to the G-protein coupled receptor 1 family.

It localises to the cell membrane. In terms of biological role, G-protein coupled receptor for 5-hydroxytryptamine (serotonin), a biogenic hormone that functions as a neurotransmitter, a hormone and a mitogen. Also functions as a receptor for ergot alkaloid derivatives and other psychoactive substances. Ligand binding causes a conformation change that triggers signaling via guanine nucleotide-binding proteins (G proteins) and modulates the activity of downstream effectors. HTR5A is coupled to G(i)/G(o) G alpha proteins and mediates inhibitory neurotransmission: signaling inhibits adenylate cyclase activity and activates a phosphatidylinositol-calcium second messenger system that regulates the release of Ca(2+) ions from intracellular stores. This Homo sapiens (Human) protein is 5-hydroxytryptamine receptor 5A.